A 156-amino-acid polypeptide reads, in one-letter code: Ribonuclease pancreatic (156 aa).

The first 28 residues, 1 to 28, serve as a signal peptide directing secretion; it reads MALEKSLVRLLLLVLILLVLGWVQPSLG. A compositionally biased stretch (basic and acidic residues) spans 33 to 43; that stretch reads AKKFQRQHMDS. Residues 33–53 form a disordered region; sequence AKKFQRQHMDSDSSPSSSSTY. Residues Lys-35 and Arg-38 each contribute to the substrate site. His-40 serves as the catalytic Proton acceptor. Intrachain disulfides connect Cys-54–Cys-112, Cys-68–Cys-123, Cys-86–Cys-138, and Cys-93–Cys-100. Asn-62 is a glycosylation site (N-linked (GlcNAc...) asparagine; partial). Substrate is bound by residues 69-73 and Lys-94; that span reads KPVNT. Asn-104 carries N-linked (GlcNAc...) asparagine glycosylation. Arg-113 is a binding site for substrate. The N-linked (GlcNAc...) asparagine glycan is linked to Asn-116. His-147 functions as the Proton donor in the catalytic mechanism.

Belongs to the pancreatic ribonuclease family. In terms of assembly, monomer. Interacts with and forms tight 1:1 complexes with RNH1. Dimerization of two such complexes may occur. Interaction with RNH1 inhibits this protein. N-linked glycans are of complex type. As to expression, pancreas and other tissues and body fluids (indicating it may have other physiological functions besides its role in digestion).

It is found in the secreted. It catalyses the reaction an [RNA] containing cytidine + H2O = an [RNA]-3'-cytidine-3'-phosphate + a 5'-hydroxy-ribonucleotide-3'-[RNA].. The enzyme catalyses an [RNA] containing uridine + H2O = an [RNA]-3'-uridine-3'-phosphate + a 5'-hydroxy-ribonucleotide-3'-[RNA].. Functionally, endonuclease that catalyzes the cleavage of RNA on the 3' side of pyrimidine nucleotides. Acts on single-stranded and double-stranded RNA. This chain is Ribonuclease pancreatic (RNASE1), found in Homo sapiens (Human).